The following is a 211-amino-acid chain: RING finger protein narya (211 aa).

The RING-type zinc finger occupies 6–47 (CNKCFRHRKTDPAVPFHLTQCRHVICGPCLGQSSLEKNCPLC). The tract at residues 149 to 211 (RRRHSAGERF…FGSDTKGFRL (63 aa)) is disordered. The span at 153-165 (SAGERFHTPEFKE) shows a compositional bias: basic and acidic residues. Positions 172-184 (STSDKSPSDMPSD) are enriched in low complexity.

In terms of assembly, may interact with itself, with nenya and vilya through its RING-type zinc finger. As to expression, expressed in nurse cell and pro-oocytes (at protein level).

The protein resides in the chromosome. Required for the formation of DNA double-strand breaks (DSBs) together with nenya and vilya during the meiotic recombination process. Plays a role in DSBs processing into crossovers. Plays a redundant role with nenya in chromosome segregation during female meiosis. In Drosophila melanogaster (Fruit fly), this protein is RING finger protein narya.